The chain runs to 146 residues: Large ribosomal subunit protein uL15 (146 aa).

The span at 1–18 (MKLHELKAAEGTRKERNR) shows a compositional bias: basic and acidic residues. Positions 1 to 58 (MKLHELKAAEGTRKERNRVGRGMSSGNGKTSGRGHKGQKARSGGGVRPGFEGGQMPLF) are disordered. Residues 42–52 (SGGGVRPGFEG) show a composition bias toward gly residues.

Belongs to the universal ribosomal protein uL15 family. As to quaternary structure, part of the 50S ribosomal subunit.

Its function is as follows. Binds to the 23S rRNA. The sequence is that of Large ribosomal subunit protein uL15 from Oceanobacillus iheyensis (strain DSM 14371 / CIP 107618 / JCM 11309 / KCTC 3954 / HTE831).